We begin with the raw amino-acid sequence, 451 residues long: FAD-dependent monooxygenase adrH (451 aa).

FAD-binding residues include Glu39, Gly53, and Arg112. Residue Tyr196 is part of the active site. Positions 288 and 301 each coordinate FAD. N-linked (GlcNAc...) asparagine glycosylation is present at Asn385. A helical membrane pass occupies residues 426 to 446; sequence TLLWVSSLALFLFFPWLGSYL.

The protein belongs to the paxM FAD-dependent monooxygenase family. It depends on FAD as a cofactor.

It is found in the membrane. It functions in the pathway secondary metabolite biosynthesis; terpenoid biosynthesis. FAD-dependent monooxygenase; part of the gene cluster that mediates the biosynthesis of andrastins, meroterpenoid compounds that exhibit inhibitory activity against ras farnesyltransferase, suggesting that they could be promising leads for antitumor agents. The first step of the pathway is the synthesis of 3,5-dimethylorsellinic acid (DMOA) by the polyketide synthase adrD via condensation of one acetyl-CoA starter unit with 3 malonyl-CoA units and 2 methylations. DMAO is then converted to farnesyl-DMAO by the prenyltransferase adrG. The methyltransferase adrK catalyzes the methylation of the carboxyl group of farnesyl-DMAO to farnesyl-DMAO methyl ester which is further converted to epoxyfarnesyl-DMAO methyl ester by the FAD-dependent monooxygenase adrH. The terpene cyclase adrI then catalyzes the carbon skeletal rearrangement to generate the andrastin E, the first compound in the pathway having the andrastin scaffold, with the tetracyclic ring system. The post-cyclization tailoring enzymes adrF, adrE, adrJ, and adrA, are involved in the conversion of andrastin E into andrastin A. The short chain dehydrogenase adrF is responsible for the oxidation of the C-3 a hydroxyl group of andrastin E to yield the corresponding ketone, andrastin D. The ketoreductase adrE stereoselectively reduces the carbonyl moiety to reverse the stereochemistry of the C-3 position to yield andrastin F. The acetyltransferase adrJ is the acetyltransferase that attaches the acetyl group to the C-3 hydroxyl group of andrastin F to yield andrastin C. Finally, the cytochrome P450 monooxygenase adrA catalyzes two sequential oxidation reactions of the C-23 methyl group, to generate the corresponding alcohol andrastin B, and aldehyde andrastin A. This Penicillium rubens (strain ATCC 28089 / DSM 1075 / NRRL 1951 / Wisconsin 54-1255) (Penicillium chrysogenum) protein is FAD-dependent monooxygenase adrH.